Here is a 107-residue protein sequence, read N- to C-terminus: NADH dehydrogenase [ubiquinone] 1 beta subcomplex subunit 10-A (107 aa).

Residues 1–23 (MGRKKGLPEFEESAPDGFDPENP) are disordered.

The protein belongs to the complex I NDUFB10 subunit family. Complex I is composed of at least 49 different subunits.

Its subcellular location is the mitochondrion inner membrane. Accessory subunit of the mitochondrial membrane respiratory chain NADH dehydrogenase (Complex I), that is believed not to be involved in catalysis. Complex I functions in the transfer of electrons from NADH to the respiratory chain. The immediate electron acceptor for the enzyme is believed to be ubiquinone. The protein is NADH dehydrogenase [ubiquinone] 1 beta subcomplex subunit 10-A of Arabidopsis thaliana (Mouse-ear cress).